A 267-amino-acid chain; its full sequence is Cyclin-C (267 aa).

In terms of domain architecture, Cyclin N-terminal spans 48 to 151 (IQVLGEQLKL…LLENLDCCLI (104 aa)).

The protein belongs to the cyclin family. Cyclin C subfamily. Component of the Cdk8 module of the Mediator complex.

Its subcellular location is the nucleus. Component of the Mediator complex, a coactivator involved in regulated gene transcription of nearly all RNA polymerase II-dependent genes. Mediator functions as a bridge to convey information from gene-specific regulatory proteins to the basal RNA polymerase II transcription machinery. Mediator is recruited to promoters by direct interactions with regulatory proteins and serves as a scaffold for the assembly of a functional preinitiation complex with RNA polymerase II and the general transcription factors. Binds to and activates cyclin-dependent kinase Cdk8 that phosphorylates the CTD (C-terminal domain) of the large subunit of RNA polymerase II (RNAp II), which may inhibit the formation of a transcription initiation complex. The sequence is that of Cyclin-C (CycC) from Drosophila pseudoobscura pseudoobscura (Fruit fly).